A 331-amino-acid chain; its full sequence is Phosphoenolpyruvate transferase (331 aa).

D63 is a 7,8-didemethyl-8-hydroxy-5-deazariboflavin binding site.

Belongs to the CofD family. As to quaternary structure, homodimer. The cofactor is Mg(2+).

The enzyme catalyses enolpyruvoyl-2-diphospho-5'-guanosine + 7,8-didemethyl-8-hydroxy-5-deazariboflavin = dehydro coenzyme F420-0 + GMP + H(+). It participates in cofactor biosynthesis; coenzyme F420 biosynthesis. Functionally, catalyzes the transfer of the phosphoenolpyruvate moiety from enoylpyruvoyl-2-diphospho-5'-guanosine (EPPG) to 7,8-didemethyl-8-hydroxy-5-deazariboflavin (FO) with the formation of dehydro coenzyme F420-0 and GMP. The protein is Phosphoenolpyruvate transferase of Mycobacterium sp. (strain KMS).